The sequence spans 292 residues: ATP synthase gamma chain (292 aa).

Belongs to the ATPase gamma chain family. F-type ATPases have 2 components, CF(1) - the catalytic core - and CF(0) - the membrane proton channel. CF(1) has five subunits: alpha(3), beta(3), gamma(1), delta(1), epsilon(1). CF(0) has three main subunits: a, b and c.

The protein localises to the cell inner membrane. Functionally, produces ATP from ADP in the presence of a proton gradient across the membrane. The gamma chain is believed to be important in regulating ATPase activity and the flow of protons through the CF(0) complex. The sequence is that of ATP synthase gamma chain from Bradyrhizobium sp. (strain ORS 278).